Consider the following 624-residue polypeptide: tRNA uridine 5-carboxymethylaminomethyl modification enzyme MnmG (624 aa).

FAD is bound by residues Gly-14 to Gly-19, Val-126, and Ser-181. Position 273 to 287 (Gly-273 to Phe-287) interacts with NAD(+). Position 370 (Gln-370) interacts with FAD.

This sequence belongs to the MnmG family. As to quaternary structure, homodimer. Heterotetramer of two MnmE and two MnmG subunits. It depends on FAD as a cofactor.

It localises to the cytoplasm. Its function is as follows. NAD-binding protein involved in the addition of a carboxymethylaminomethyl (cmnm) group at the wobble position (U34) of certain tRNAs, forming tRNA-cmnm(5)s(2)U34. This chain is tRNA uridine 5-carboxymethylaminomethyl modification enzyme MnmG, found in Geotalea uraniireducens (strain Rf4) (Geobacter uraniireducens).